Here is a 481-residue protein sequence, read N- to C-terminus: F-box/FBD/LRR-repeat protein At5g18770 (481 aa).

The F-box domain occupies 23-69 (EDMISALPDHLLCHILIFLSTDESVLTSVLSSRWRNLWKWVPRLDLN). LRR repeat units lie at residues 126-153 (KPNV…TLSA), 159-185 (CLKL…YLED), 186-211 (VVFP…KLSL), 214-234 (DDVV…TLKR), 236-261 (VPVY…SLID), 289-314 (DELS…TISW), and 340-368 (ATMS…HFTL). An FBD domain is found at 378-430 (VITGFSRVLPRCLVFSLESVEMESPITEKATELKLVRYFLENSATLKKLVLLL).

This chain is F-box/FBD/LRR-repeat protein At5g18770, found in Arabidopsis thaliana (Mouse-ear cress).